The chain runs to 120 residues: NAD(P)H-quinone oxidoreductase subunit 3, chloroplastic (120 aa).

3 consecutive transmembrane segments (helical) span residues 7–27, 64–84, and 89–109; these read YQTFWVFIMISSLIPLLALLI, SFALVFVIFDVETVFLYPWAM, and LGIFAFIEALIFVFILIIGLV.

The protein belongs to the complex I subunit 3 family. As to quaternary structure, NDH is composed of at least 16 different subunits, 5 of which are encoded in the nucleus.

The protein localises to the plastid. Its subcellular location is the chloroplast thylakoid membrane. The enzyme catalyses a plastoquinone + NADH + (n+1) H(+)(in) = a plastoquinol + NAD(+) + n H(+)(out). The catalysed reaction is a plastoquinone + NADPH + (n+1) H(+)(in) = a plastoquinol + NADP(+) + n H(+)(out). Functionally, NDH shuttles electrons from NAD(P)H:plastoquinone, via FMN and iron-sulfur (Fe-S) centers, to quinones in the photosynthetic chain and possibly in a chloroplast respiratory chain. The immediate electron acceptor for the enzyme in this species is believed to be plastoquinone. Couples the redox reaction to proton translocation, and thus conserves the redox energy in a proton gradient. The chain is NAD(P)H-quinone oxidoreductase subunit 3, chloroplastic from Psilotum nudum (Whisk fern).